A 1330-amino-acid chain; its full sequence is Ubinuclein-2 (1330 aa).

The tract at residues 1–113 is disordered; the sequence is MAEPRRVAFI…PPPRPPKETV (113 aa). The residue at position 13 (serine 13) is a Phosphoserine. Composition is skewed to basic and acidic residues over residues 16 to 31 and 55 to 67; these read RRRE…EPPR and ARDK…EVSR. The segment covering 81–96 has biased composition (pro residues); it reads PEPPPPPLPLQTPPPR. At threonine 229 the chain carries Phosphothreonine. Serine 236 is modified (phosphoserine). 2 disordered regions span residues 236-304 and 322-345; these read SDTE…KKRY and DALK…PKPP. Threonine 238 is subject to Phosphothreonine. Lysine 258 is covalently cross-linked (Glycyl lysine isopeptide (Lys-Gly) (interchain with G-Cter in SUMO2)). Serine 297 bears the Phosphoserine mark. Residues serine 402, serine 405, serine 408, and serine 570 each carry the phosphoserine modification. 7 disordered regions span residues 559–583, 767–789, 801–835, 866–909, 964–991, 1021–1202, and 1292–1330; these read LQAD…KRVI, NKGP…GLRE, LATP…DLAH, GLQR…SLTQ, YRLP…APST, PKLA…SSVV, and PGTQ…RKPQ. A compositionally biased stretch (basic and acidic residues) spans 560-570; sequence QADEEREKNGS. Composition is skewed to polar residues over residues 767 to 780 and 809 to 818; these read NKGP…NVPT and SPQTAHSSSL. Low complexity predominate over residues 866-895; that stretch reads GLQRSSQIHASSSQTHVSSSQAQAAASSHA. Composition is skewed to polar residues over residues 899 to 909 and 969 to 980; these read SEAQDASSLTQ and STPSPGNGSQGS. Residues 1030-1044 show a composition bias toward pro residues; the sequence is ATSPKPLTSPKPSVS. Positions 1045–1056 are enriched in low complexity; that stretch reads PKPSLSAKPSVS. Lysine 1052 is subject to N6-acetyllysine. 3 stretches are compositionally biased toward polar residues: residues 1073-1148, 1158-1169, and 1308-1317; these read PSSS…NSLS, RGSNLNSSGANR, and HLQQAFNDGG. Position 1107 is a phosphoserine (serine 1107). Position 1132 is an N6-acetyllysine (lysine 1132). Positions 1321-1330 are enriched in basic and acidic residues; the sequence is GDTKLPRKPQ.

It belongs to the ubinuclein family.

The chain is Ubinuclein-2 (Ubn2) from Rattus norvegicus (Rat).